Reading from the N-terminus, the 328-residue chain is B3 domain-containing protein At5g60140 (328 aa).

Positions 13 to 109 (SKFFKPYLPS…FFNFSIFDHE (97 aa)) form a DNA-binding region, TF-B3. The interval 145-221 (LNSDDSDDSD…EDEDDLEDED (77 aa)) is disordered. Composition is skewed to acidic residues over residues 148 to 182 (DDSD…AEDG) and 190 to 221 (GLED…EDED).

It localises to the nucleus. This chain is B3 domain-containing protein At5g60140, found in Arabidopsis thaliana (Mouse-ear cress).